The chain runs to 437 residues: Tol-Pal system protein TolB (437 aa).

Residues 1 to 30 (MLPTPSRSHKLSGYAAVLFFLWLVCSPAQA) form the signal peptide. Residues 410 to 423 (SDGRTRQQLSTQTG) are compositionally biased toward polar residues. Residues 410 to 437 (SDGRTRQQLSTQTGDIREPAWGPLRRLQ) are disordered.

This sequence belongs to the TolB family. As to quaternary structure, the Tol-Pal system is composed of five core proteins: the inner membrane proteins TolA, TolQ and TolR, the periplasmic protein TolB and the outer membrane protein Pal. They form a network linking the inner and outer membranes and the peptidoglycan layer.

The protein resides in the periplasm. Its function is as follows. Part of the Tol-Pal system, which plays a role in outer membrane invagination during cell division and is important for maintaining outer membrane integrity. In Nitrosospira multiformis (strain ATCC 25196 / NCIMB 11849 / C 71), this protein is Tol-Pal system protein TolB.